The primary structure comprises 511 residues: Lysine--tRNA ligase (511 aa).

2 residues coordinate Mg(2+): glutamate 422 and glutamate 429.

This sequence belongs to the class-II aminoacyl-tRNA synthetase family. Homodimer. The cofactor is Mg(2+).

It localises to the cytoplasm. The enzyme catalyses tRNA(Lys) + L-lysine + ATP = L-lysyl-tRNA(Lys) + AMP + diphosphate. This chain is Lysine--tRNA ligase, found in Chlorobaculum tepidum (strain ATCC 49652 / DSM 12025 / NBRC 103806 / TLS) (Chlorobium tepidum).